The sequence spans 758 residues: 5-methyltetrahydropteroyltriglutamate--homocysteine methyltransferase (758 aa).

5-methyltetrahydropteroyltri-L-glutamate is bound by residues 16–19 (RELK) and Lys116. L-homocysteine is bound by residues 436–438 (IGS) and Glu489. L-methionine-binding positions include 436–438 (IGS) and Glu489. 5-methyltetrahydropteroyltri-L-glutamate-binding positions include 520–521 (RC) and Trp566. L-homocysteine is bound at residue Asp604. An L-methionine-binding site is contributed by Asp604. Position 610 (Glu610) interacts with 5-methyltetrahydropteroyltri-L-glutamate. Zn(2+) is bound by residues His646, Cys648, and Glu670. Residue His699 is the Proton donor of the active site. Cys731 serves as a coordination point for Zn(2+).

Belongs to the vitamin-B12 independent methionine synthase family. Zn(2+) serves as cofactor.

It catalyses the reaction 5-methyltetrahydropteroyltri-L-glutamate + L-homocysteine = tetrahydropteroyltri-L-glutamate + L-methionine. The protein operates within amino-acid biosynthesis; L-methionine biosynthesis via de novo pathway; L-methionine from L-homocysteine (MetE route): step 1/1. Catalyzes the transfer of a methyl group from 5-methyltetrahydrofolate to homocysteine resulting in methionine formation. This chain is 5-methyltetrahydropteroyltriglutamate--homocysteine methyltransferase, found in Nitrosococcus oceani (strain ATCC 19707 / BCRC 17464 / JCM 30415 / NCIMB 11848 / C-107).